An 835-amino-acid polypeptide reads, in one-letter code: Leucine--tRNA ligase (835 aa).

Residues 36–46 (PYPSGKIHVGH) carry the 'HIGH' region motif. A 'KMSKS' region motif is present at residues 602–606 (KMSKS). Lysine 605 serves as a coordination point for ATP.

It belongs to the class-I aminoacyl-tRNA synthetase family.

It localises to the cytoplasm. The catalysed reaction is tRNA(Leu) + L-leucine + ATP = L-leucyl-tRNA(Leu) + AMP + diphosphate. The chain is Leucine--tRNA ligase from Rickettsia felis (strain ATCC VR-1525 / URRWXCal2) (Rickettsia azadi).